The sequence spans 269 residues: Protein UL24 (269 aa).

The interval 191–244 is disordered; that stretch reads IEPRTQRARRRRGGAARGSASRPKRSHSGARDPPESAARQLPPADQTPTSTEGG.

The protein belongs to the herpesviridae UL24 family.

Its subcellular location is the virion. The protein resides in the host cytoplasm. It is found in the host nucleus. The protein localises to the host nucleolus. It localises to the host Golgi apparatus. Functionally, may participate in nuclear egress of viral particles. Plays a role in the dispersal of several host nucleolar proteins including NCL/nucleolin and NPM1. Since deletion of host NCL/nucleolin negatively impact on nuclear egress, UL24 supposedly acts on this process through its effect on host nucleoli. The polypeptide is Protein UL24 (Homo sapiens (Human)).